A 216-amino-acid polypeptide reads, in one-letter code: Adenylate kinase (216 aa).

Position 10-15 (10-15 (GSGKGT)) interacts with ATP. An NMP region spans residues 30-59 (STGDMLRAAVKEGTPMGVKAKAKMDAGALV). AMP is bound by residues Thr-31, Arg-36, 57-59 (ALV), 85-88 (GFPR), and Gln-92. Positions 126–163 (GRRTCRDCGKMYHVEFDAPAVADKCDKCGGQLFQRDDD) are LID. Arg-127 lines the ATP pocket. The Zn(2+) site is built by Cys-130, Cys-133, Cys-150, and Cys-153. AMP-binding residues include Arg-160 and Arg-171. Position 199 (Lys-199) interacts with ATP.

This sequence belongs to the adenylate kinase family. In terms of assembly, monomer.

The protein resides in the cytoplasm. The enzyme catalyses AMP + ATP = 2 ADP. It participates in purine metabolism; AMP biosynthesis via salvage pathway; AMP from ADP: step 1/1. Functionally, catalyzes the reversible transfer of the terminal phosphate group between ATP and AMP. Plays an important role in cellular energy homeostasis and in adenine nucleotide metabolism. The polypeptide is Adenylate kinase (Syntrophotalea carbinolica (strain DSM 2380 / NBRC 103641 / GraBd1) (Pelobacter carbinolicus)).